The primary structure comprises 149 residues: NADH-quinone oxidoreductase subunit A (149 aa).

3 helical membrane-spanning segments follow: residues 16 to 36 (FGIF…GAWF), 68 to 88 (FYLV…LFAW), and 98 to 118 (LGFI…VYLV).

It belongs to the complex I subunit 3 family. In terms of assembly, NDH-1 is composed of 13 different subunits. Subunits NuoA, H, J, K, L, M, N constitute the membrane sector of the complex.

The protein localises to the cell inner membrane. It carries out the reaction a quinone + NADH + 5 H(+)(in) = a quinol + NAD(+) + 4 H(+)(out). In terms of biological role, NDH-1 shuttles electrons from NADH, via FMN and iron-sulfur (Fe-S) centers, to quinones in the respiratory chain. The immediate electron acceptor for the enzyme in this species is believed to be ubiquinone. Couples the redox reaction to proton translocation (for every two electrons transferred, four hydrogen ions are translocated across the cytoplasmic membrane), and thus conserves the redox energy in a proton gradient. This Cronobacter sakazakii (strain ATCC BAA-894) (Enterobacter sakazakii) protein is NADH-quinone oxidoreductase subunit A.